The primary structure comprises 967 residues: Isoleucine--tRNA ligase 2 (967 aa).

Positions 58 to 68 (PYANGDIHIGH) match the 'HIGH' region motif. The disordered stretch occupies residues 430–463 (EADPGRADVTEEAGATGEARKVGKAEEAEEAGPV). An L-isoleucyl-5'-AMP-binding site is contributed by glutamate 598. The 'KMSKS' region signature appears at 639–643 (KMSKS). Position 642 (lysine 642) interacts with ATP. 4 residues coordinate Zn(2+): cysteine 922, cysteine 925, cysteine 942, and cysteine 945.

Belongs to the class-I aminoacyl-tRNA synthetase family. IleS type 1 subfamily. In terms of assembly, monomer. Zn(2+) is required as a cofactor.

Its subcellular location is the cytoplasm. It carries out the reaction tRNA(Ile) + L-isoleucine + ATP = L-isoleucyl-tRNA(Ile) + AMP + diphosphate. In terms of biological role, catalyzes the attachment of isoleucine to tRNA(Ile). As IleRS can inadvertently accommodate and process structurally similar amino acids such as valine, to avoid such errors it has two additional distinct tRNA(Ile)-dependent editing activities. One activity is designated as 'pretransfer' editing and involves the hydrolysis of activated Val-AMP. The other activity is designated 'posttransfer' editing and involves deacylation of mischarged Val-tRNA(Ile). This chain is Isoleucine--tRNA ligase 2, found in Burkholderia pseudomallei (strain K96243).